The primary structure comprises 115 residues: uncharacterized protein (115 aa).

Transmembrane regions (helical) follow at residues 1–21 (MFLAGVLCMCAAAASALFGSW), 33–53 (ALALRAMAPTQLAAAVMLAAG), and 54–74 (GVVAVAAPGHTALMVVIVCIA).

To M.leprae ML0030.

It localises to the cell membrane. This is an uncharacterized protein from Mycobacterium tuberculosis (strain CDC 1551 / Oshkosh).